A 365-amino-acid polypeptide reads, in one-letter code: Leu/Ile/Val/Thr-binding protein (365 aa).

The first 21 residues, 1-21 (MKGKTLLAGCIALSLSHMAFA), serve as a signal peptide directing secretion. C74 and C99 form a disulfide bridge.

It belongs to the leucine-binding protein family.

Its subcellular location is the periplasm. Its function is as follows. This protein is a component of the leucine, isoleucine, valine, threonine transport system, which is one of the two periplasmic binding protein-dependent transport systems of the high-affinity transport of the branched-chain amino acids. This Salmonella typhimurium (strain LT2 / SGSC1412 / ATCC 700720) protein is Leu/Ile/Val/Thr-binding protein (livJ).